The primary structure comprises 149 residues: Large ribosomal subunit protein eL24B (149 aa).

A Phosphoserine modification is found at serine 50. A disordered region spans residues 96–149 (QRPEVRAAARAAALKQRKDKRAASESEKKAIKAKSAASSARGQAIKNAKVAARR). Over residues 116–125 (RAASESEKKA) the composition is skewed to basic and acidic residues.

The protein belongs to the eukaryotic ribosomal protein eL24 family. As to quaternary structure, component of the large ribosomal subunit (LSU). Mature yeast ribosomes consist of a small (40S) and a large (60S) subunit. The 40S small subunit contains 1 molecule of ribosomal RNA (18S rRNA) and at least 33 different proteins. The large 60S subunit contains 3 rRNA molecules (25S, 5.8S and 5S rRNA) and at least 46 different proteins.

The protein localises to the cytoplasm. Component of the ribosome, a large ribonucleoprotein complex responsible for the synthesis of proteins in the cell. The small ribosomal subunit (SSU) binds messenger RNAs (mRNAs) and translates the encoded message by selecting cognate aminoacyl-transfer RNA (tRNA) molecules. The large subunit (LSU) contains the ribosomal catalytic site termed the peptidyl transferase center (PTC), which catalyzes the formation of peptide bonds, thereby polymerizing the amino acids delivered by tRNAs into a polypeptide chain. The nascent polypeptides leave the ribosome through a tunnel in the LSU and interact with protein factors that function in enzymatic processing, targeting, and the membrane insertion of nascent chains at the exit of the ribosomal tunnel. This Schizosaccharomyces pombe (strain 972 / ATCC 24843) (Fission yeast) protein is Large ribosomal subunit protein eL24B (rpl2402).